The sequence spans 456 residues: Senecionine N-oxygenase (456 aa).

An N-terminal signal peptide occupies residues 1 to 22 (MFRKFVIMLVLSLLVAAGISQA). 32 to 37 (GAGYSG) contributes to the FAD binding site. 215-220 (GAGPSG) is an NADP(+) binding site.

Belongs to the FMO family. As to quaternary structure, homotetramer. The cofactor is FAD. Hemolymph.

It is found in the secreted. It carries out the reaction senecionine + NADPH + O2 = senecionine N-oxide + NADP(+) + H2O. Functionally, NADPH-dependent monooxygenase that detoxifies senecionine and similar plant alkaloids that are ingested by the larvae. Is active towards a narrow range of related substrates with highest activity towards senecionine, followed by seneciphylline, retrorsine, monocrotaline, senecivernine, axillarine and axillaridine. This is Senecionine N-oxygenase (sno1) from Tyria jacobaeae (Cinnabar moth).